Here is a 188-residue protein sequence, read N- to C-terminus: Large ribosomal subunit protein bL32m (188 aa).

Zn(2+)-binding residues include Cys-110, Cys-113, Cys-123, and Cys-126. The interval Gly-162 to Asn-188 is disordered. The segment covering Pro-165–Arg-181 has biased composition (basic and acidic residues).

This sequence belongs to the bacterial ribosomal protein bL32 family. Component of the mitochondrial ribosome large subunit (39S) which comprises a 16S rRNA and about 50 distinct proteins. MRPL32 precursor is processed by the m-AAA protease (composed of AFG3L2 and SPG7), which cleaves the N-terminal transit peptide. Cleavage by the m-AAA protease takes place prior to assembly into the large subunit, an essential step for mitochondrial ribosome (mitoribosome) assembly. Proper processing by the m-AAA protease is dependent on the zinc-binding region within the tightly folded C-terminal domain of MRPL32: zinc-dependent folding halts degradation initiated from the N-terminus and triggers the release of mature MRPL32.

It localises to the mitochondrion. Functionally, component of the mitochondrial large ribosomal subunit (mt-LSU). The mitochondrial ribosome (mitoribosome) is a large ribonucleoprotein complex responsible for the synthesis of proteins inside mitochondria. This Bos taurus (Bovine) protein is Large ribosomal subunit protein bL32m (MRPL32).